Consider the following 1146-residue polypeptide: Ankyrin repeat domain-containing protein 24 (1146 aa).

5 ANK repeats span residues 81–110, 114–143, 147–176, 180–209, and 213–242; these read EGKS…NVMS, AGYN…VVDV, SGWT…HLNP, SGAT…AAND, and QGRT…QPGI. Disordered stretches follow at residues 272–320, 607–627, and 766–785; these read RPSP…PDDR, REME…GAQA, and ERVR…GDTT. Positions 286-297 are enriched in polar residues; sequence EASSQNSMSSHG. Residues 320 to 517 are a coiled coil; that stretch reads RDAYEEIVRL…QALRQQETRE (198 aa). A coiled-coil region spans residues 714 to 1110; it reads AAEASEKLQV…AARDHSSVVA (397 aa).

Homodimer. Interacts (via C-terminal domain) with TRIOBP (via C-terminal domain) isoform 4; recruits TRIOBP isoform 4 to stereocilia rootlets.

Its subcellular location is the cell membrane. It is found in the cell projection. The protein localises to the stereocilium. In terms of biological role, component of the stereocilia rootlet in hair cells of inner ear. Bridges the apical plasma membrane with the lower rootlet and maintains normal distribution of TRIOBP, thereby reinforcing stereocilia insertion points and organizing rootlets for hearing with long-term resilience. This is Ankyrin repeat domain-containing protein 24 from Homo sapiens (Human).